Consider the following 1165-residue polypeptide: ATP-dependent helicase/deoxyribonuclease subunit B (1165 aa).

The UvrD-like helicase ATP-binding domain maps to 1 to 298 (MALRFILGRA…AHLEREFFRR (298 aa)). 8–15 (GRAGTGKT) contributes to the ATP binding site. The UvrD-like helicase C-terminal domain maps to 279-584 (PARFRANPAL…QLALIPPALD (306 aa)). [4Fe-4S] cluster contacts are provided by Cys800, Cys1119, Cys1122, and Cys1128.

This sequence belongs to the helicase family. AddB/RexB type 1 subfamily. Heterodimer of AddA and AddB. Requires Mg(2+) as cofactor. [4Fe-4S] cluster is required as a cofactor.

The heterodimer acts as both an ATP-dependent DNA helicase and an ATP-dependent, dual-direction single-stranded exonuclease. Recognizes the chi site generating a DNA molecule suitable for the initiation of homologous recombination. The AddB subunit has 5' -&gt; 3' nuclease activity but not helicase activity. The chain is ATP-dependent helicase/deoxyribonuclease subunit B from Desulforudis audaxviator (strain MP104C).